A 377-amino-acid chain; its full sequence is Protein-arginine rhamnosyltransferase (377 aa).

A dTDP-beta-L-rhamnose-binding site is contributed by Y15. The active-site Proton acceptor is D17. DTDP-beta-L-rhamnose is bound by residues Y193, Q255, and 271–275 (RGEDS). The active site involves E273.

The protein belongs to the glycosyltransferase 104 family.

It carries out the reaction dTDP-beta-L-rhamnose + L-arginyl-[protein] = N(omega)-(alpha-L-rhamnosyl)-L-arginyl-[protein] + dTDP + H(+). Its function is as follows. Protein-arginine rhamnosyltransferase that catalyzes the transfer of a single rhamnose to elongation factor P (EF-P) on 'Lys-32', a modification required for EF-P-dependent rescue of polyproline stalled ribosomes. The protein is Protein-arginine rhamnosyltransferase of Pseudomonas putida (strain ATCC 47054 / DSM 6125 / CFBP 8728 / NCIMB 11950 / KT2440).